The primary structure comprises 75 residues: UPF0235 protein Mvan_2846 (75 aa).

This sequence belongs to the UPF0235 family.

The protein is UPF0235 protein Mvan_2846 of Mycolicibacterium vanbaalenii (strain DSM 7251 / JCM 13017 / BCRC 16820 / KCTC 9966 / NRRL B-24157 / PYR-1) (Mycobacterium vanbaalenii).